Here is a 195-residue protein sequence, read N- to C-terminus: uncharacterized protein (195 aa).

The region spanning 24–141 (NTDENLKLIF…VFLADKISWD (118 aa)) is the HD domain.

This is an uncharacterized protein from Lactococcus lactis subsp. cremoris (Streptococcus cremoris).